A 267-amino-acid polypeptide reads, in one-letter code: Cyclin-C (267 aa).

One can recognise a Cyclin N-terminal domain in the interval 48–151; sequence IQVLGEQLKL…LLENLDCCLI (104 aa).

This sequence belongs to the cyclin family. Cyclin C subfamily. In terms of assembly, component of the Cdk8 module of the Mediator complex, composed of CycC, Cdk8, kto and skd.

It localises to the nucleus. Functionally, component of the Mediator complex, a coactivator involved in regulated gene transcription of nearly all RNA polymerase II-dependent genes. Mediator functions as a bridge to convey information from gene-specific regulatory proteins to the basal RNA polymerase II transcription machinery. Mediator is recruited to promoters by direct interactions with regulatory proteins and serves as a scaffold for the assembly of a functional preinitiation complex with RNA polymerase II and the general transcription factors. Binds to and activates cyclin-dependent kinase Cdk8 that phosphorylates the CTD (C-terminal domain) of the large subunit of RNA polymerase II (RNAp II), which may inhibit the formation of a transcription initiation complex. Required for leg and eye development and macrochaete specification or differentiation. The protein is Cyclin-C (CycC) of Drosophila melanogaster (Fruit fly).